The sequence spans 129 residues: Iron-sulfur cluster assembly 1 homolog, mitochondrial (129 aa).

The transit peptide at 1-12 directs the protein to the mitochondrion; it reads MSASLVRATVRA. Fe cation contacts are provided by C57, C121, and C123.

The protein belongs to the HesB/IscA family. In terms of assembly, interacts with CRY2, but not with CRY1 (in vitro).

The protein resides in the mitochondrion. Its function is as follows. Involved in the maturation of mitochondrial 4Fe-4S proteins functioning late in the iron-sulfur cluster assembly pathway. Probably involved in the binding of an intermediate of Fe/S cluster assembly. This Rattus norvegicus (Rat) protein is Iron-sulfur cluster assembly 1 homolog, mitochondrial (Isca1).